Consider the following 471-residue polypeptide: MSIQISETLTFECETGNYHTFCPISCVAWLYQKIEDSFFLVIGTKTCGYFLQNALGVMIFAEPRYAMAELEEGDISAQLNDYEELKRLCFQIKKDRNPSVIIWIGTCTTEIIKMDLEGMAPKLEVELGVPIVVARANGLDYAFTQGEDTVLAAMAHRCPERDLLIDENKVIQNQTIQNIFSLFSQKKKEETLKYLELKNHPPLVLFGSLPSTVASQLSLELKRQSIQVSGWLPTQRYTDLPSLGDGVYVCGVNPFLSRTATTLIRRRKCKLIGAPFPIGPDGTRAWIEKISSVFGIKTKGLEEREQQVWQSLKNYLNLVRGKSVFFMGDNLLEISLARFLIRCGMIVYEIGIPYMDKRYQAAELALLRNTCREMCTPMPRIVEKPDNYNQIQRMRELQPDLAITGMAHANPLEARGINTKWSVEFTFAQIHGFTNAKDVLELVTRPLRRNNSLEDLGWTNLIKKDNKIKVI.

[4Fe-4S] cluster is bound by residues cysteine 22, cysteine 47, and cysteine 107.

This sequence belongs to the BchN/ChlN family. As to quaternary structure, protochlorophyllide reductase is composed of three subunits; ChlL, ChlN and ChlB. Forms a heterotetramer of two ChlB and two ChlN subunits. [4Fe-4S] cluster is required as a cofactor.

Its subcellular location is the plastid. The protein resides in the chloroplast. It carries out the reaction chlorophyllide a + oxidized 2[4Fe-4S]-[ferredoxin] + 2 ADP + 2 phosphate = protochlorophyllide a + reduced 2[4Fe-4S]-[ferredoxin] + 2 ATP + 2 H2O. The protein operates within porphyrin-containing compound metabolism; chlorophyll biosynthesis (light-independent). Functionally, component of the dark-operative protochlorophyllide reductase (DPOR) that uses Mg-ATP and reduced ferredoxin to reduce ring D of protochlorophyllide (Pchlide) to form chlorophyllide a (Chlide). This reaction is light-independent. The NB-protein (ChlN-ChlB) is the catalytic component of the complex. In Anthoceros angustus (Hornwort), this protein is Light-independent protochlorophyllide reductase subunit N.